The following is a 750-amino-acid chain: Elastin (750 aa).

An N-terminal signal peptide occupies residues 1-24 (ARQAAAPLLPGVLLLFSILPASQQ). 7 positions are modified to 4-hydroxyproline: Pro32, Pro67, Pro102, Pro176, Pro189, Pro192, and Pro211. The stretch at 83-127 (GAGVGGLGAGLGAFPGAAFPGAASAAALKAAAKAGAGLGGVGGIG) is repeat 1. Positions 83–686 (GAGVGGLGAG…GVGGLGVGGL (604 aa)) are 8 X tandem repeats. 7 repeat units span residues 219-262 (VNGL…AGVL), 263-318 (PGAG…GVPG), 319-393 (VVPG…VPGV), 394-482 (PGVP…VPGV), 483-554 (GVPG…VGGL), 555-619 (VPGV…PGVT), and 620-686 (PGVG…VGGL). Pro276, Pro345, Pro363, Pro368, Pro441, Pro455, and Pro480 each carry 4-hydroxyproline. A 4-hydroxyproline mark is found at Pro576, Pro635, and Pro720. A disulfide bridge connects residues Cys739 and Cys745.

This sequence belongs to the elastin family. In terms of assembly, the polymeric elastin chains are cross-linked together into an extensible 3D network. In terms of processing, elastin is formed through the cross-linking of its soluble precursor tropoelastin. Cross-linking is initiated through the action of lysyl oxidase on exposed lysines to form allysine. Subsequent spontaneous condensation reactions with other allysine or unmodified lysine residues result in various bi-, tri-, and tetrafunctional cross-links. The most abundant cross-links in mature elastin fibers are lysinonorleucine, allysine aldol, desmosine, and isodesmosine. Post-translationally, hydroxylated on proline residues. Hydroxylation on proline residues within the sequence motif, GXPG, is most likely to be 4-hydroxy as this fits the requirement for 4-hydroxylation in vertebrates.

It is found in the secreted. It localises to the extracellular space. The protein localises to the extracellular matrix. Its function is as follows. Major structural protein of tissues such as aorta and nuchal ligament, which must expand rapidly and recover completely. In Gallus gallus (Chicken), this protein is Elastin (ELN).